The sequence spans 451 residues: Ribosomal protein uS12 methylthiotransferase RimO (451 aa).

Residues 17–127 (PTIGFVSLGC…VLAQVHEHLP (111 aa)) form the MTTase N-terminal domain. Residues Cys26, Cys62, Cys91, Cys160, Cys164, and Cys167 each contribute to the [4Fe-4S] cluster site. In terms of domain architecture, Radical SAM core spans 146 to 383 (LTPRHYAYLK…MQLQQRISTE (238 aa)). The region spanning 386-451 (KQKVGQTLPV…DEYDLWGTRV (66 aa)) is the TRAM domain.

Belongs to the methylthiotransferase family. RimO subfamily. It depends on [4Fe-4S] cluster as a cofactor.

It is found in the cytoplasm. It carries out the reaction L-aspartate(89)-[ribosomal protein uS12]-hydrogen + (sulfur carrier)-SH + AH2 + 2 S-adenosyl-L-methionine = 3-methylsulfanyl-L-aspartate(89)-[ribosomal protein uS12]-hydrogen + (sulfur carrier)-H + 5'-deoxyadenosine + L-methionine + A + S-adenosyl-L-homocysteine + 2 H(+). Catalyzes the methylthiolation of an aspartic acid residue of ribosomal protein uS12. The polypeptide is Ribosomal protein uS12 methylthiotransferase RimO (Cellvibrio japonicus (strain Ueda107) (Pseudomonas fluorescens subsp. cellulosa)).